The sequence spans 336 residues: Atypical chemokine receptor 1 (336 aa).

Topologically, residues 1 to 63 (MGNCLHTAEL…CNLLDDSALP (63 aa)) are extracellular. N-linked (GlcNAc...) asparagine glycans are attached at residues N16, N27, and N33. Intrachain disulfides connect C51–C276 and C129–C195. Residues 64 to 84 (FFILTSVLGILASSTVLFILF) form a helical membrane-spanning segment. Over 85-95 (RPLFRWQLCPG) the chain is Cytoplasmic. A helical transmembrane segment spans residues 96-116 (WPVLAQLAVGSALFSIVVPIL). At 117 to 129 (APGLGSTHSSALC) the chain is on the extracellular side. Residues 130–153 (SLGYCVWYGSAFAQALLLGCHASL) traverse the membrane as a helical segment. The Cytoplasmic portion of the chain corresponds to 154 to 166 (GHRLGAGQVPGLT). The helical transmembrane segment at 167–187 (LGLTVGIWGVAALLTLPVTLA) threads the bilayer. Residues 188–207 (SGASGGLCTPIHSTELKALQ) are Extracellular-facing. A helical membrane pass occupies residues 208–228 (ATHTVACLAIFVLLPLGLFGA). At 229–244 (KGLKKALGMGPGPWMN) the chain is on the cytoplasmic side. Residues 245–265 (ILWAWFIFWWPHGVVLGLDFL) traverse the membrane as a helical segment. Residues 266–287 (VRSKLLLLSTCLAQQALDLLLN) lie on the Extracellular side of the membrane. The chain crosses the membrane as a helical span at residues 288 to 308 (LAEALAILHCVATPLILALFY). The Cytoplasmic portion of the chain corresponds to 309–336 (HQATRTLLPSLPLPEGWSSHLDTLGSKS).

The protein belongs to the G-protein coupled receptor 1 family. Atypical chemokine receptor subfamily.

The protein resides in the early endosome. The protein localises to the recycling endosome. Its subcellular location is the membrane. Its function is as follows. Atypical chemokine receptor that controls chemokine levels and localization via high-affinity chemokine binding that is uncoupled from classic ligand-driven signal transduction cascades, resulting instead in chemokine sequestration, degradation, or transcytosis. Also known as interceptor (internalizing receptor) or chemokine-scavenging receptor or chemokine decoy receptor. Has a promiscuous chemokine-binding profile, interacting with inflammatory chemokines of both the CXC and the CC subfamilies but not with homeostatic chemokines. Acts as a receptor for chemokines including CCL2, CCL5, CCL7, CCL11, CCL13, CCL14, CCL17, CXCL5, CXCL6, IL8/CXCL8, CXCL11, GRO, RANTES, MCP-1 and TARC. May regulate chemokine bioavailability and, consequently, leukocyte recruitment through two distinct mechanisms: when expressed in endothelial cells, it sustains the abluminal to luminal transcytosis of tissue-derived chemokines and their subsequent presentation to circulating leukocytes; when expressed in erythrocytes, serves as blood reservoir of cognate chemokines but also as a chemokine sink, buffering potential surges in plasma chemokine levels. The protein is Atypical chemokine receptor 1 (ACKR1) of Gorilla gorilla gorilla (Western lowland gorilla).